We begin with the raw amino-acid sequence, 913 residues long: Protein ECT2 (913 aa).

A2 is subject to N-acetylalanine. BRCT domains follow at residues 176 to 260 and 266 to 354; these read MLNL…AAVD and FKVP…MYLY. Phosphothreonine; by PKC/PRKCI is present on T359. A phosphoserine mark is found at S367 and S370. At T373 the chain carries Phosphothreonine. A Phosphoserine modification is found at S376. 2 short sequence motifs (nuclear localization signal) span residues 378–382 and 401–405; these read RKRRR and PRKRP. 2 disordered regions span residues 389-415 and 427-450; these read QLSRETDLSPFPPRKRPSAEHSLSIGS and IHYGETPKSCAKSSRSSTPVPPKQ. A Phosphothreonine; by CDK1 modification is found at T444. Residues 452 to 641 enclose the DH domain; sequence ARWQVAKELY…KEVMTHINED (190 aa). K611 is covalently cross-linked (Glycyl lysine isopeptide (Lys-Gly) (interchain with G-Cter in SUMO2)). A PH domain is found at 675–794; it reads RVETVSLGEH…KMLCRHVANT (120 aa). Phosphoserine is present on residues S716 and S842. T846 is modified (phosphothreonine; by CDK1). Residues 853 to 874 form a disordered region; the sequence is MALSSSHSSEGRSPPSSGKLAV. Low complexity predominate over residues 856 to 870; sequence SSSHSSEGRSPPSSG. Phosphoserine is present on residues S861 and S865.

As to quaternary structure, homodimer. Homooligomer. Found in the centralspindlin complex. Interacts with NR1I3. Interacts (Thr-359 phosphorylated form) with PARD6A; the interaction is observed in cancer cells. Interacts (Thr-359 phosphorylated form) with PRKCI; the interaction is observed in cancer cells. Interacts with PKP4; the interaction is observed at the midbody. Interacts with RACGAP1; the interaction is direct, occurs in a microtubule-dependent manner, occurs at anaphase and during cytokinesis, is inhibited in metaphase by phosphorylation of ECT2 on Thr-373 and is stimulated in early anaphase by dephosphorylation of ECT2 probably on Thr-373 through CDK1 activity. Interacts with PLK1; the interaction is stimulated upon its phosphorylation on Thr-444. Interacts with RHOA; the interaction results in allosteric activation of ECT2. Interacts with KIF23, PARD3, PARD6B and PRKCQ. Interacts with NEDD9/HEF1. Post-translationally, phosphorylated by PLK1 in vitro. Hyperphosphorylated during the G2 phase of the cell cycle. Phosphorylation at Thr-373 occurs during the G2/M phase, relieves its auto-inhibition status and stimulates its GEF activity. Phosphorylation at Thr-444 in G2/M phase is required for subsequent binding with PLK1 and Rho exchange activation. Dephosphorylated at the time of cytokinesis. Phosphorylation at Thr-359 is required for its transformation activity in cancer cells. As to expression, highest expression in testis. Also detectable in brain, kidney, liver and spleen.

The protein localises to the nucleus. The protein resides in the cytoplasm. Its subcellular location is the cytoskeleton. It localises to the spindle. It is found in the cleavage furrow. The protein localises to the midbody. The protein resides in the cell junction. Its subcellular location is the tight junction. With respect to regulation, autoinhibited by the C-terminal PH domain which folds back and binds to the surface of the DH domain, blocking binding of RHOA to the catalytic center of the DH domain. The 2nd BRCT domain is also involved in inhibition, probably by helping to impede RHOA binding. Allosterically activated by binding of activated GTP-bound RHOA to the PH domain which stimulates the release of PH inhibition and promotes the binding of substrate RHOA to the catalytic center. Binding of phosphorylated RACGAP1 to the N-terminal BRCT domain-containing region also releases autoinhibition. In terms of biological role, guanine nucleotide exchange factor (GEF) that catalyzes the exchange of GDP for GTP. Promotes guanine nucleotide exchange on the Rho family members of small GTPases, like RHOA, RHOC, RAC1 and CDC42. Required for signal transduction pathways involved in the regulation of cytokinesis. Component of the centralspindlin complex that serves as a microtubule-dependent and Rho-mediated signaling required for the myosin contractile ring formation during the cell cycle cytokinesis. Regulates the translocation of RHOA from the central spindle to the equatorial region. Plays a role in the control of mitotic spindle assembly; regulates the activation of CDC42 in metaphase for the process of spindle fibers attachment to kinetochores before chromosome congression. Involved in the regulation of epithelial cell polarity; participates in the formation of epithelial tight junctions in a polarity complex PARD3-PARD6-protein kinase PRKCQ-dependent manner. Plays a role in the regulation of neurite outgrowth. Inhibits phenobarbital (PB)-induced NR1I3 nuclear translocation. Stimulates the activity of RAC1 through its association with the oncogenic PARD6A-PRKCI complex in cancer cells, thereby acting to coordinately drive tumor cell proliferation and invasion. Also stimulates genotoxic stress-induced RHOB activity in breast cancer cells leading to their cell death. The protein is Protein ECT2 (Ect2) of Mus musculus (Mouse).